Consider the following 413-residue polypeptide: Ribulose bisphosphate carboxylase/oxygenase activase, chloroplastic (413 aa).

The transit peptide at 1–54 (MAATVSTIGAVNRTTLNNSNYGGLVPNSAFLGSRLKVSSRFTTSKMVTGNFKIV) directs the protein to the chloroplast. 162 to 169 (GGKGQGKS) provides a ligand contact to ATP.

This sequence belongs to the RuBisCO activase family.

The protein localises to the plastid. The protein resides in the chloroplast stroma. Its function is as follows. Activation of RuBisCO (ribulose-1,5-bisphosphate carboxylase/oxygenase; EC 4.1.1.39) involves the ATP-dependent carboxylation of the epsilon-amino group of lysine leading to a carbamate structure. The chain is Ribulose bisphosphate carboxylase/oxygenase activase, chloroplastic from Cucumis sativus (Cucumber).